The sequence spans 394 residues: Elongation factor Tu 2 (394 aa).

One can recognise a tr-type G domain in the interval K10–E204. Residues G19 to T26 are G1. G19–T26 is a binding site for GTP. Position 26 (T26) interacts with Mg(2+). The segment at G60 to N64 is G2. The G3 stretch occupies residues D81 to G84. Residues D81–H85 and N136–D139 each bind GTP. Positions N136–D139 are G4. Positions S174–L176 are G5.

The protein belongs to the TRAFAC class translation factor GTPase superfamily. Classic translation factor GTPase family. EF-Tu/EF-1A subfamily. Monomer.

The protein localises to the cytoplasm. The catalysed reaction is GTP + H2O = GDP + phosphate + H(+). In terms of biological role, GTP hydrolase that promotes the GTP-dependent binding of aminoacyl-tRNA to the A-site of ribosomes during protein biosynthesis. This Serratia proteamaculans (strain 568) protein is Elongation factor Tu 2.